A 271-amino-acid polypeptide reads, in one-letter code: Zinc finger protein 501 (271 aa).

9 C2H2-type zinc fingers span residues 22–44 (SKCS…QRIH), 50–72 (YVCS…LRIH), 78–100 (YKCN…LRIH), 106–128 (YKCN…QRIH), 134–156 (YKCT…QRSH), 162–184 (FKCN…QRIH), 190–212 (YTCT…ERTH), 218–240 (YKCS…YRIH), and 246–268 (YECV…QRLH).

It belongs to the krueppel C2H2-type zinc-finger protein family.

It is found in the nucleus. The protein localises to the nucleolus. May be involved in transcriptional regulation. Essential for Golgi structural integrity. This Homo sapiens (Human) protein is Zinc finger protein 501 (ZNF501).